Here is a 258-residue protein sequence, read N- to C-terminus: Indole-3-glycerol phosphate synthase (258 aa).

It belongs to the TrpC family.

The enzyme catalyses 1-(2-carboxyphenylamino)-1-deoxy-D-ribulose 5-phosphate + H(+) = (1S,2R)-1-C-(indol-3-yl)glycerol 3-phosphate + CO2 + H2O. Its pathway is amino-acid biosynthesis; L-tryptophan biosynthesis; L-tryptophan from chorismate: step 4/5. This Exiguobacterium sibiricum (strain DSM 17290 / CCUG 55495 / CIP 109462 / JCM 13490 / 255-15) protein is Indole-3-glycerol phosphate synthase.